The primary structure comprises 157 residues: MTQPSCPCGSGDPLDDCCGRYHQGHPAPTAEALMRSRYSAYALGLVDYLRDTTLPAQQAGLDLDGIRAWSHGSTWLGLEVENHEVLGGQPEHARVTFVARWHDADGEHAHRECSGFVQRNGRWYFLDPTVALKLGRNDPCPCGAGGKLKKCCGPWIT.

This sequence belongs to the UPF0225 family.

This Pseudomonas aeruginosa (strain ATCC 15692 / DSM 22644 / CIP 104116 / JCM 14847 / LMG 12228 / 1C / PRS 101 / PAO1) protein is UPF0225 protein PA1039.